A 351-amino-acid polypeptide reads, in one-letter code: ATP-dependent 6-phosphofructokinase subunit gamma (351 aa).

Heterododecamer of 4 alpha, 4 beta and 4 gamma chains. The gamma chain bridges the N-terminal halves of the alpha and beta subunits.

Its subcellular location is the cytoplasm. It participates in carbohydrate degradation; glycolysis; D-glyceraldehyde 3-phosphate and glycerone phosphate from D-glucose: step 3/4. Its function is as follows. Structural subunit of pyrophosphate--fructose 6-phosphate 1-phosphotransferase. Not required for catalytic activity. Fine-tunes allosteric regulation of the ATP-PFK by ATP, fructose 2,6-bisphosphate and AMP. In Komagataella pastoris (Yeast), this protein is ATP-dependent 6-phosphofructokinase subunit gamma (PFK3).